The primary structure comprises 321 residues: MNKYQTHWVEHSEVKILSTTGKKHIALVAGGMSAEREVSLVSSEGVSKALIELGYKVTFIDMGADIAVKLQEIKPDIVFNCLHGTYGEDGCLPGLLNIMRIPYTHSGVLSSALAFDKIHSRSWFLTNNINMAESIIVNKSDNIKSDPVKRPYVIKPLTQGSSIGVEVIFEEDDFNFADYNFPYGYQVIIEQYIKGRELQVAVLNGKALGALEIKLLKNRFYDYETKYTEGFAEHLCPAPLPTNLYEKLLVESEKIYKTMNCKGPARAEFILEEQTNKLYALEINTHPGMTPLSIVPEIAAYAGINFTNLIEEIIKTASFES.

In terms of domain architecture, ATP-grasp spans 121-315; it reads RSWFLTNNIN…FTNLIEEIIK (195 aa). An ATP-binding site is contributed by 147–199; that stretch reads PVKRPYVIKPLTQGSSIGVEVIFEEDDFNFADYNFPYGYQVIIEQYIKGRELQ. 3 residues coordinate Mg(2+): Glu-268, Glu-282, and Asn-284.

The protein belongs to the D-alanine--D-alanine ligase family. Mg(2+) is required as a cofactor. It depends on Mn(2+) as a cofactor.

It is found in the cytoplasm. The enzyme catalyses 2 D-alanine + ATP = D-alanyl-D-alanine + ADP + phosphate + H(+). It functions in the pathway cell wall biogenesis; peptidoglycan biosynthesis. Functionally, cell wall formation. The polypeptide is D-alanine--D-alanine ligase (Rickettsia felis (strain ATCC VR-1525 / URRWXCal2) (Rickettsia azadi)).